We begin with the raw amino-acid sequence, 208 residues long: Neuroendocrine protein 7B2 (208 aa).

The signal sequence occupies residues 1-26 (MGMYSAIPLALPMVLLMVYGLTPSLG). A disulfide bond links Cys-120 and Cys-129. Residue Ser-204 is modified to Phosphoserine.

It belongs to the 7B2 family. Interacts with pcsk2 early in the secretory pathway. Dissociation occurs at later stages. Post-translationally, proteolytically cleaved in the Golgi by a furin-like convertase to generate bioactive peptides. Sulfated on tyrosine residues.

Its subcellular location is the secreted. Acts as a molecular chaperone for pcsk2, preventing its premature activation in the regulated secretory pathway. Binds to inactive pcsk2 in the endoplasmic reticulum and facilitates its transport from there to later compartments of the secretory pathway where it is proteolytically matured and activated. Also required for cleavage of pcsk2 but does not appear to be involved in its folding. The protein is Neuroendocrine protein 7B2 (scg5.L) of Xenopus laevis (African clawed frog).